The sequence spans 359 residues: tRNA N6-adenosine threonylcarbamoyltransferase (359 aa).

Positions 115 and 119 each coordinate Fe cation. Substrate is bound by residues 137–141 (LVSGG), D170, G183, and N283. D311 lines the Fe cation pocket. The tract at residues 328–359 (APDSLDIAPRSRWPLDEKSAPVFGTGRRGAKA) is disordered.

This sequence belongs to the KAE1 / TsaD family. Fe(2+) is required as a cofactor.

The protein resides in the cytoplasm. It carries out the reaction L-threonylcarbamoyladenylate + adenosine(37) in tRNA = N(6)-L-threonylcarbamoyladenosine(37) in tRNA + AMP + H(+). Functionally, required for the formation of a threonylcarbamoyl group on adenosine at position 37 (t(6)A37) in tRNAs that read codons beginning with adenine. Is involved in the transfer of the threonylcarbamoyl moiety of threonylcarbamoyl-AMP (TC-AMP) to the N6 group of A37, together with TsaE and TsaB. TsaD likely plays a direct catalytic role in this reaction. The protein is tRNA N6-adenosine threonylcarbamoyltransferase of Brucella ovis (strain ATCC 25840 / 63/290 / NCTC 10512).